The following is a 185-amino-acid chain: HTH-type transcriptional regulator Hpr (185 aa).

The HTH marR-type domain occupies 13–157; that stretch reads AMIFSQRIAQ…LIAILRNIYG (145 aa). Positions 63-86 form a DNA-binding region, H-T-H motif; the sequence is ISEIAKFGVMHVSTAFNFSKKLEE.

In terms of assembly, homodimer.

Its function is as follows. Negative regulator of protease production and sporulation. In Bacillus cereus (strain G9842), this protein is HTH-type transcriptional regulator Hpr.